A 38-amino-acid polypeptide reads, in one-letter code: Photosystem II reaction center protein L (38 aa).

The chain crosses the membrane as a helical span at residues 17–37 (SLYWGLLLIFVLAVLFSNYFF).

This sequence belongs to the PsbL family. In terms of assembly, PSII is composed of 1 copy each of membrane proteins PsbA, PsbB, PsbC, PsbD, PsbE, PsbF, PsbH, PsbI, PsbJ, PsbK, PsbL, PsbM, PsbT, PsbX, PsbY, PsbZ, Psb30/Ycf12, at least 3 peripheral proteins of the oxygen-evolving complex and a large number of cofactors. It forms dimeric complexes.

The protein resides in the plastid. The protein localises to the chloroplast thylakoid membrane. Functionally, one of the components of the core complex of photosystem II (PSII). PSII is a light-driven water:plastoquinone oxidoreductase that uses light energy to abstract electrons from H(2)O, generating O(2) and a proton gradient subsequently used for ATP formation. It consists of a core antenna complex that captures photons, and an electron transfer chain that converts photonic excitation into a charge separation. This subunit is found at the monomer-monomer interface and is required for correct PSII assembly and/or dimerization. In Psilotum nudum (Whisk fern), this protein is Photosystem II reaction center protein L.